The sequence spans 379 residues: UDP-4-amino-4-deoxy-L-arabinose--oxoglutarate aminotransferase (379 aa).

Residue K182 is modified to N6-(pyridoxal phosphate)lysine.

This sequence belongs to the DegT/DnrJ/EryC1 family. ArnB subfamily. In terms of assembly, homodimer. It depends on pyridoxal 5'-phosphate as a cofactor.

The enzyme catalyses UDP-4-amino-4-deoxy-beta-L-arabinose + 2-oxoglutarate = UDP-beta-L-threo-pentopyranos-4-ulose + L-glutamate. Its pathway is nucleotide-sugar biosynthesis; UDP-4-deoxy-4-formamido-beta-L-arabinose biosynthesis; UDP-4-deoxy-4-formamido-beta-L-arabinose from UDP-alpha-D-glucuronate: step 2/3. It functions in the pathway bacterial outer membrane biogenesis; lipopolysaccharide biosynthesis. Catalyzes the conversion of UDP-4-keto-arabinose (UDP-Ara4O) to UDP-4-amino-4-deoxy-L-arabinose (UDP-L-Ara4N). The modified arabinose is attached to lipid A and is required for resistance to polymyxin and cationic antimicrobial peptides. The sequence is that of UDP-4-amino-4-deoxy-L-arabinose--oxoglutarate aminotransferase from Shigella boydii serotype 4 (strain Sb227).